Consider the following 426-residue polypeptide: Serine--tRNA ligase (426 aa).

235-237 (TAE) is an L-serine binding site. Position 266 to 268 (266 to 268 (RRE)) interacts with ATP. Glutamate 289 contributes to the L-serine binding site. 353-356 (EISS) is an ATP binding site. Serine 389 provides a ligand contact to L-serine.

It belongs to the class-II aminoacyl-tRNA synthetase family. Type-1 seryl-tRNA synthetase subfamily. As to quaternary structure, homodimer. The tRNA molecule binds across the dimer.

It localises to the cytoplasm. The enzyme catalyses tRNA(Ser) + L-serine + ATP = L-seryl-tRNA(Ser) + AMP + diphosphate + H(+). The catalysed reaction is tRNA(Sec) + L-serine + ATP = L-seryl-tRNA(Sec) + AMP + diphosphate + H(+). It functions in the pathway aminoacyl-tRNA biosynthesis; selenocysteinyl-tRNA(Sec) biosynthesis; L-seryl-tRNA(Sec) from L-serine and tRNA(Sec): step 1/1. In terms of biological role, catalyzes the attachment of serine to tRNA(Ser). Is also able to aminoacylate tRNA(Sec) with serine, to form the misacylated tRNA L-seryl-tRNA(Sec), which will be further converted into selenocysteinyl-tRNA(Sec). In Trichormus variabilis (strain ATCC 29413 / PCC 7937) (Anabaena variabilis), this protein is Serine--tRNA ligase.